The sequence spans 176 residues: Retinol-binding protein 4-A (176 aa).

Position 1 is an N-acetylserine (Ser1). Disulfide bonds link Cys3–Cys159, Cys69–Cys173, and Cys119–Cys128. Substrate is bound at residue Gln97.

This sequence belongs to the calycin superfamily. Lipocalin family.

It localises to the secreted. RBP delivers retinol from the liver stores to the peripheral tissues. In plasma, the RBP-retinol complex interacts with transthyretin, this prevents its loss by filtration through the kidney glomeruli. The sequence is that of Retinol-binding protein 4-A (rbp4a) from Oncorhynchus mykiss (Rainbow trout).